The primary structure comprises 341 residues: Glycerol-3-phosphate dehydrogenase [NAD(P)+] 1 (341 aa).

The NADPH site is built by serine 11, tryptophan 12, arginine 32, arginine 33, and lysine 106. The sn-glycerol 3-phosphate site is built by lysine 106, glycine 137, and serine 139. Alanine 141 is an NADPH binding site. 5 residues coordinate sn-glycerol 3-phosphate: lysine 192, aspartate 245, serine 255, arginine 256, and asparagine 257. The active-site Proton acceptor is lysine 192. Arginine 256 is a binding site for NADPH. Positions 280 and 282 each coordinate NADPH.

The protein belongs to the NAD-dependent glycerol-3-phosphate dehydrogenase family.

The protein resides in the cytoplasm. The catalysed reaction is sn-glycerol 3-phosphate + NAD(+) = dihydroxyacetone phosphate + NADH + H(+). It carries out the reaction sn-glycerol 3-phosphate + NADP(+) = dihydroxyacetone phosphate + NADPH + H(+). It functions in the pathway membrane lipid metabolism; glycerophospholipid metabolism. In terms of biological role, catalyzes the reduction of the glycolytic intermediate dihydroxyacetone phosphate (DHAP) to sn-glycerol 3-phosphate (G3P), the key precursor for phospholipid synthesis. This is Glycerol-3-phosphate dehydrogenase [NAD(P)+] 1 from Salinibacter ruber (strain DSM 13855 / M31).